A 475-amino-acid chain; its full sequence is Ribulose bisphosphate carboxylase large chain (475 aa).

Positions 1–2 are excised as a propeptide; the sequence is MA. Pro-3 carries the post-translational modification N-acetylproline. Lys-14 carries the N6,N6,N6-trimethyllysine modification. Substrate contacts are provided by Asn-123 and Thr-173. Lys-175 acts as the Proton acceptor in catalysis. Lys-177 is a binding site for substrate. Residues Lys-201, Asp-203, and Glu-204 each coordinate Mg(2+). Lys-201 bears the N6-carboxylysine mark. His-294 (proton acceptor) is an active-site residue. Substrate is bound by residues Arg-295, His-327, and Ser-379.

Belongs to the RuBisCO large chain family. Type I subfamily. Heterohexadecamer of 8 large chains and 8 small chains; disulfide-linked. The disulfide link is formed within the large subunit homodimers. Requires Mg(2+) as cofactor. Post-translationally, the disulfide bond which can form in the large chain dimeric partners within the hexadecamer appears to be associated with oxidative stress and protein turnover.

The protein localises to the plastid. It localises to the chloroplast. It carries out the reaction 2 (2R)-3-phosphoglycerate + 2 H(+) = D-ribulose 1,5-bisphosphate + CO2 + H2O. The enzyme catalyses D-ribulose 1,5-bisphosphate + O2 = 2-phosphoglycolate + (2R)-3-phosphoglycerate + 2 H(+). Functionally, ruBisCO catalyzes two reactions: the carboxylation of D-ribulose 1,5-bisphosphate, the primary event in carbon dioxide fixation, as well as the oxidative fragmentation of the pentose substrate in the photorespiration process. Both reactions occur simultaneously and in competition at the same active site. In Bryopsis maxima (Green alga), this protein is Ribulose bisphosphate carboxylase large chain.